The chain runs to 307 residues: Follistatin-related protein 1 (307 aa).

An N-terminal signal peptide occupies residues 1–19 (MMWRRWLALALVAVAWVHA). Residues 29 to 52 (ICANVFCGAGRECAVTEKGEPTCL) form the Follistatin-like domain. Cystine bridges form between C30/C41, C35/C51, C53/C83, C57/C76, and C65/C97. A Kazal-like domain is found at 47 to 99 (GEPTCLCIEQCKPHKRPVCGSNGKTYLNHCELHRDACLTGSKIQVDYDGHCKE). N143 is a glycosylation site (N-linked (GlcNAc...) asparagine). Positions 143-177 (NYSEILDKYFKNFDNGDSRLDSSEFLKFVEQNETA) constitute an EF-hand 1 domain. S164 is modified (phosphoserine). N-linked (GlcNAc...) asparagine glycosylation is found at N174 and N179. The region spanning 192–227 (LRGLCVDALIELSDENADWKLSFQEFLKCLNPSFNP) is the EF-hand 2 domain. A VWFC domain is found at 232-286 (CALEDETYADGAETEVDCNRCVCACGNWVCTAMTCDGKNQKGAQTQAEEEMTRYV).

As to quaternary structure, homodimer. Interacts with SCN10A. Interacts with DIP2A; DIP2A may act as a cell surface receptor for FSTL1. Interacts with BMP4. Interacts with CD14; this interaction promotes TL4-mediated signaling cascade.

The protein localises to the secreted. Functionally, secreted glycoprotein that is involved in various physiological processes, such as angiogenesis, regulation of the immune response, cell proliferation and differentiation. Plays a role in the development of the central nervous system, skeletal system, lungs, and ureter. Promotes endothelial cell survival, migration and differentiation into network structures in an AKT-dependent manner. Also promotes survival of cardiac myocytes. Initiates various signaling cascades by activating different receptors on the cell surface such as DIP2A, TLR4 or BMP receptors. The chain is Follistatin-related protein 1 (FSTL1) from Bos taurus (Bovine).